A 305-amino-acid polypeptide reads, in one-letter code: PI-PLC X domain-containing protein 2 (305 aa).

One can recognise a PI-PLC X-box domain in the interval 42–215 (HLHNLPLSNL…NCQVLIFYHC (174 aa)). Catalysis depends on residues histidine 57 and histidine 132.

Widely expressed.

The protein localises to the nucleus. The enzyme catalyses a 1,2-diacyl-sn-glycero-3-phospho-(1D-myo-inositol) + H2O = 1D-myo-inositol 1-phosphate + a 1,2-diacyl-sn-glycerol + H(+). In terms of biological role, catalyzes the hydrolysis of inositol from phosphatidylinositol (1,2-diacyl-sn-glycero-3-phospho-(1D-myo-inositol), PI). Could also hydrolyze various multi-phosphorylated derivatives of PI, such as phosphatidylinositol-4,5 bisphosphate (PIP2), releasing inositol-1,4,5-trisphosphate (IP3) and the protein kinase C activator diacylglycerol (DAG), therefore mediating cell signaling. The sequence is that of PI-PLC X domain-containing protein 2 (PLCXD2) from Homo sapiens (Human).